A 603-amino-acid polypeptide reads, in one-letter code: MSIDQSKIRNFCIIAHIDHGKSTLADRIIEKTGTLTSREMQAQVLDNMDLERERGITIKSQAVRIIYTAKDGEEYIFNLIDTPGHVDFNYEVSRSLAACDGAILVVDAAQGVEAQTLANVYLALDHDLDVFPVINKVDLPSARPDEVAQEIEDVIGIEAMDAPRISAKTGLNIEDVLEQIVKKIPAPTGDKDAPLKALIFDATYDSYKGVIIFCRLREGSVKVGDTIKMMATGASDVVTEVGYFGAGQFIPCDELSAGMVGYIAASIKNVRDTRVGDTVTLVDRPCDEALPGYKKVNPMVYCGLYPADSAKYPDLRDALEKLQVNDASLQFEPETSLALGFGFRCGFLGLLHLEIIQERLEREFDLDLVTTAPSVIYKIHKTSGEVIDLTNPSNMPDPSEIEYMEEPYVSAEIMVTSDYVGAIMKLCQERRGVYISMEYIEKTRALIKYDLPLNEIIYDFFDALKSRSRGYASFDYEMKDYERSELVKLDILINKEMVDALSFIVFKESAYERGRKMCEKLKGEIPRHLFEIPIQAAVGGKIIARETVKALRKDVLAKCYGGDISRKKKLLEKQKEGKKRMRQVGNVEIPQEAFMSVLKLDEE.

Residues 6–188 form the tr-type G domain; that stretch reads SKIRNFCIIA…QIVKKIPAPT (183 aa). Residues 18–23 and 135–138 each bind GTP; these read DHGKST and NKVD.

The protein belongs to the TRAFAC class translation factor GTPase superfamily. Classic translation factor GTPase family. LepA subfamily.

The protein localises to the cell membrane. It carries out the reaction GTP + H2O = GDP + phosphate + H(+). In terms of biological role, required for accurate and efficient protein synthesis under certain stress conditions. May act as a fidelity factor of the translation reaction, by catalyzing a one-codon backward translocation of tRNAs on improperly translocated ribosomes. Back-translocation proceeds from a post-translocation (POST) complex to a pre-translocation (PRE) complex, thus giving elongation factor G a second chance to translocate the tRNAs correctly. Binds to ribosomes in a GTP-dependent manner. The protein is Elongation factor 4 of Agathobacter rectalis (strain ATCC 33656 / DSM 3377 / JCM 17463 / KCTC 5835 / VPI 0990) (Eubacterium rectale).